The chain runs to 430 residues: Histidine--tRNA ligase (430 aa).

This sequence belongs to the class-II aminoacyl-tRNA synthetase family. Homodimer.

It is found in the cytoplasm. It catalyses the reaction tRNA(His) + L-histidine + ATP = L-histidyl-tRNA(His) + AMP + diphosphate + H(+). This is Histidine--tRNA ligase from Acinetobacter baumannii (strain SDF).